Here is a 1302-residue protein sequence, read N- to C-terminus: DNA-directed RNA polymerase subunit beta (1302 aa).

The protein belongs to the RNA polymerase beta chain family. In terms of assembly, the RNAP catalytic core consists of 2 alpha, 1 beta, 1 beta' and 1 omega subunit. When a sigma factor is associated with the core the holoenzyme is formed, which can initiate transcription.

The enzyme catalyses RNA(n) + a ribonucleoside 5'-triphosphate = RNA(n+1) + diphosphate. In terms of biological role, DNA-dependent RNA polymerase catalyzes the transcription of DNA into RNA using the four ribonucleoside triphosphates as substrates. This is DNA-directed RNA polymerase subunit beta from Spiroplasma citri.